The chain runs to 71 residues: Non-structural protein 3x (71 aa).

The chain is Non-structural protein 3x from Feline coronavirus (strain FIPV WSU-79/1146) (FCoV).